We begin with the raw amino-acid sequence, 490 residues long: Sec sixty-one protein homolog (490 aa).

The Cytoplasmic segment spans residues 1–32 (MSGFRLIDIVKPILPILPEVELPFEKLPFDDK). A helical membrane pass occupies residues 33–53 (IVYTIFAGLIYLFAQFPLVGL). Over 54 to 121 (PKATTPNVND…DRELFQSLTK (68 aa)) the chain is Lumenal. A helical membrane pass occupies residues 122–142 (VFAIVQYVILTNIFIFAGYFG). The Cytoplasmic portion of the chain corresponds to 143–146 (DDLS). The helical transmembrane segment at 147–167 (VVQIGLINFQLVGAGIFTTLL) threads the bilayer. At 168–174 (AEVIDKG) the chain is on the lumenal side. A helical transmembrane segment spans residues 175-195 (FGFSSGAMIINTVVIATNLVA). Topologically, residues 196 to 242 (DTFGVSQIKVGEDDQTEAQGALINLIQGLRSKHKTFIGGIISAFNRD) are cytoplasmic. A helical transmembrane segment spans residues 243–263 (YLPNLTTTIIVLAIAIIVCYL). Residues 264–293 (QSVRVELPIRSTRARGTNNVYPIKLLYTGC) lie on the Lumenal side of the membrane. A helical membrane pass occupies residues 294–314 (LSVLFSYTILFYIHIFAFVLI). At 315–339 (QLVAKNEPTHIICKIMGHYENANNL) the chain is on the cytoplasmic side. The helical transmembrane segment at 340 to 360 (LAVPTFPLSLLAPPTSFFKGV) threads the bilayer. Residue Thr-361 is a topological domain, lumenal. A helical transmembrane segment spans residues 362–382 (QQPLTFITYSAFILVTGIWFA). Residues 383-421 (DKWQAISGSSARDVALEFKDQGITLMGRREQNVAKELNK) lie on the Cytoplasmic side of the membrane. The helical transmembrane segment at 422 to 442 (VIPIAAVTGASVLSLITVIGE) threads the bilayer. At 443–449 (SLGLKGK) the chain is on the lumenal side. Residues 450-470 (AAGIVVGIAGGFSLLEVITIE) form a helical membrane-spanning segment. Residues 471–490 (YQQSGGQSALNQVLGVPGAM) are Cytoplasmic-facing.

Belongs to the SecY/SEC61-alpha family. In terms of assembly, component of the heterotrimeric Ssh1 complex, which is composed of SSH1, SBH2 and SSS1.

It is found in the endoplasmic reticulum membrane. Part of the Ssh1 complex, which probably is the major component of a channel-forming translocon complex that may function exclusively in the cotranslational pathway of protein endoplasmic reticulum (ER) import. The chain is Sec sixty-one protein homolog (SSH1) from Saccharomyces cerevisiae (strain ATCC 204508 / S288c) (Baker's yeast).